The primary structure comprises 253 residues: Sulfate transporter CysZ (253 aa).

4 consecutive transmembrane segments (helical) span residues 27–47 (FVLL…YLAV), 71–91 (ILWP…FTVV), 150–170 (LFIL…WLLF), and 211–231 (IVYV…AAVA).

Belongs to the CysZ family.

The protein resides in the cell inner membrane. Functionally, high affinity, high specificity proton-dependent sulfate transporter, which mediates sulfate uptake. Provides the sulfur source for the cysteine synthesis pathway. This is Sulfate transporter CysZ from Pseudomonas syringae pv. tomato (strain ATCC BAA-871 / DC3000).